A 137-amino-acid polypeptide reads, in one-letter code: Proofreading thioesterase EntH (137 aa).

Glutamate 63 acts as the Nucleophile or proton acceptor in catalysis.

This sequence belongs to the thioesterase PaaI family. Homotetramer. Dimer of dimers. Interacts specifically with the aryl carrier protein (ArCP) domain of EntB.

Its subcellular location is the cytoplasm. The protein operates within siderophore biosynthesis; enterobactin biosynthesis. In terms of biological role, required for optimal enterobactin synthesis. Acts as a proofreading enzyme that prevents EntB misacylation by hydrolyzing the thioester bound existing between EntB and wrongly charged molecules. The polypeptide is Proofreading thioesterase EntH (Cronobacter turicensis (strain DSM 18703 / CCUG 55852 / LMG 23827 / z3032)).